The sequence spans 324 residues: Cathepsin L-like proteinase (324 aa).

An N-terminal signal peptide occupies residues 1–16 (MKLIIALAALIVVINA). Intrachain disulfides connect C131-C174, C165-C206, and C263-C312. Residue C134 is part of the active site. Residues H270 and N290 contribute to the active site.

It belongs to the peptidase C1 family. As to expression, expressed in larval carcasses and gut, and adult gut.

This Phaedon cochleariae (Mustard beetle) protein is Cathepsin L-like proteinase.